Consider the following 577-residue polypeptide: Aspartate--tRNA(Asp/Asn) ligase (577 aa).

Glu-171 serves as a coordination point for L-aspartate. The segment at 195-198 (QLFK) is aspartate. Residue Arg-217 participates in L-aspartate binding. ATP is bound by residues 217 to 219 (RDE) and Gln-226. His-444 is a binding site for L-aspartate. Glu-474 is a binding site for ATP. Arg-481 provides a ligand contact to L-aspartate. Residue 526-529 (GFDR) coordinates ATP.

The protein belongs to the class-II aminoacyl-tRNA synthetase family. Type 1 subfamily. As to quaternary structure, homodimer.

The protein localises to the cytoplasm. It carries out the reaction tRNA(Asx) + L-aspartate + ATP = L-aspartyl-tRNA(Asx) + AMP + diphosphate. Its function is as follows. Aspartyl-tRNA synthetase with relaxed tRNA specificity since it is able to aspartylate not only its cognate tRNA(Asp) but also tRNA(Asn). Reaction proceeds in two steps: L-aspartate is first activated by ATP to form Asp-AMP and then transferred to the acceptor end of tRNA(Asp/Asn). In Helicobacter pylori (strain Shi470), this protein is Aspartate--tRNA(Asp/Asn) ligase.